An 835-amino-acid polypeptide reads, in one-letter code: Leucine--tRNA ligase (835 aa).

The short motif at 36-46 (PYPSGKIHVGH) is the 'HIGH' region element. The short motif at 602-606 (KMSKS) is the 'KMSKS' region element. Lys605 provides a ligand contact to ATP.

This sequence belongs to the class-I aminoacyl-tRNA synthetase family.

Its subcellular location is the cytoplasm. The catalysed reaction is tRNA(Leu) + L-leucine + ATP = L-leucyl-tRNA(Leu) + AMP + diphosphate. The polypeptide is Leucine--tRNA ligase (Rickettsia conorii (strain ATCC VR-613 / Malish 7)).